The sequence spans 436 residues: EPS I polysaccharide export inner membrane protein EpsE (436 aa).

12 helical membrane passes run 20–40, 49–69, 91–111, 132–152, 160–180, 184–204, 234–254, 261–281, 307–327, 341–361, 375–395, and 396–416; these read VLGLGAAVASRGAVFLVNIML, FGLFSYAYVTALNLGLFLATG, LCAFIVLLVALIAVAATALYL, MAAIVLIATAFTQALQAFLYA, ASVSIGAALLLLAMLWTMGPI, VVALVIFLAINAGAAASQLVI, VLTTSMGAPVHWICLSMLAAM, LALFSVAFQWYIAITFIPATL, ALLFGGGLSLALGCMAFLLAG, AAASMRSLAVAAALCGISVLL, FAMAAVYSVIYVAAAYLALRL, and GYGAPSIGLAMSAAYCCLILF.

The protein to E.coli bicyclomycin resistance protein (BCR).

The protein resides in the cell inner membrane. Functionally, probably involved in polymerization and/or export of exopolysaccharide EPS I which functions as a virulence factor. May play a role in export of EPS I or its intermediates across the membranes. In Ralstonia nicotianae (strain ATCC BAA-1114 / GMI1000) (Ralstonia solanacearum), this protein is EPS I polysaccharide export inner membrane protein EpsE (epsE).